The following is a 272-amino-acid chain: Small ribosomal subunit biogenesis GTPase RsgA (272 aa).

Positions 56 to 207 (KNILIRPKVA…IIDTPGFSSI (152 aa)) constitute a CP-type G domain. GTP contacts are provided by residues 105-108 (TKAD) and 151-159 (GQSGVGKTT). Residues Cys-230, Cys-235, His-237, and Cys-245 each contribute to the Zn(2+) site.

The protein belongs to the TRAFAC class YlqF/YawG GTPase family. RsgA subfamily. As to quaternary structure, monomer. Associates with 30S ribosomal subunit, binds 16S rRNA. Requires Zn(2+) as cofactor.

It localises to the cytoplasm. One of several proteins that assist in the late maturation steps of the functional core of the 30S ribosomal subunit. Helps release RbfA from mature subunits. May play a role in the assembly of ribosomal proteins into the subunit. Circularly permuted GTPase that catalyzes slow GTP hydrolysis, GTPase activity is stimulated by the 30S ribosomal subunit. The chain is Small ribosomal subunit biogenesis GTPase RsgA from Mycoplasmopsis pulmonis (strain UAB CTIP) (Mycoplasma pulmonis).